The sequence spans 206 residues: Holliday junction branch migration complex subunit RuvA (206 aa).

Residues methionine 1–asparagine 64 form a domain I region. The domain II stretch occupies residues threonine 65–proline 143. The interval tyrosine 144–alanine 157 is flexible linker. A domain III region spans residues proline 158–leucine 206.

This sequence belongs to the RuvA family. In terms of assembly, homotetramer. Forms an RuvA(8)-RuvB(12)-Holliday junction (HJ) complex. HJ DNA is sandwiched between 2 RuvA tetramers; dsDNA enters through RuvA and exits via RuvB. An RuvB hexamer assembles on each DNA strand where it exits the tetramer. Each RuvB hexamer is contacted by two RuvA subunits (via domain III) on 2 adjacent RuvB subunits; this complex drives branch migration. In the full resolvosome a probable DNA-RuvA(4)-RuvB(12)-RuvC(2) complex forms which resolves the HJ.

It localises to the cytoplasm. Its function is as follows. The RuvA-RuvB-RuvC complex processes Holliday junction (HJ) DNA during genetic recombination and DNA repair, while the RuvA-RuvB complex plays an important role in the rescue of blocked DNA replication forks via replication fork reversal (RFR). RuvA specifically binds to HJ cruciform DNA, conferring on it an open structure. The RuvB hexamer acts as an ATP-dependent pump, pulling dsDNA into and through the RuvAB complex. HJ branch migration allows RuvC to scan DNA until it finds its consensus sequence, where it cleaves and resolves the cruciform DNA. The sequence is that of Holliday junction branch migration complex subunit RuvA from Tolumonas auensis (strain DSM 9187 / NBRC 110442 / TA 4).